Reading from the N-terminus, the 239-residue chain is MNIEQFQSMLEEKGITLSSRQLEQFEIYFETLVEWNEKMNLTAITEKEEVYLKHFFDSITAAFYYDFSKPFSICDVGAGAGFPSIPLKICFPHLKVTIVDSLQKRINFLNHLAQKLELSDVAFCHDRAETFGKKEGVREAYDIVMARAVARLSVLSELCLPLVKVGGTFIAMKGAAANEEIENGKYALEVLGGDLKEMSTFQLPFEESERNILLIEKKRKTPKKYPRKPGTPNKLPIEK.

Residues Gly-77, Phe-82, 128–129, and Arg-147 each bind S-adenosyl-L-methionine; that span reads AE.

The protein belongs to the methyltransferase superfamily. RNA methyltransferase RsmG family.

Its subcellular location is the cytoplasm. Specifically methylates the N7 position of guanine in position 535 of 16S rRNA. The protein is Ribosomal RNA small subunit methyltransferase G of Bacillus anthracis (strain A0248).